A 365-amino-acid polypeptide reads, in one-letter code: Flagellin 1 (365 aa).

This sequence belongs to the bacterial flagellin family.

Its subcellular location is the secreted. The protein localises to the bacterial flagellum. Flagellin is the subunit protein which polymerizes to form the filaments of bacterial flagella. This Proteus mirabilis protein is Flagellin 1 (fliC1).